We begin with the raw amino-acid sequence, 234 residues long: Glucosamine-6-phosphate deaminase (234 aa).

Residue Asp62 is the Proton acceptor; for enolization step of the active site. Asn128 serves as the catalytic For ring-opening step. His130 acts as the Proton acceptor; for ring-opening step in catalysis. Glu135 serves as the catalytic For ring-opening step.

The protein belongs to the glucosamine/galactosamine-6-phosphate isomerase family. NagB subfamily.

It catalyses the reaction alpha-D-glucosamine 6-phosphate + H2O = beta-D-fructose 6-phosphate + NH4(+). The protein operates within amino-sugar metabolism; N-acetylneuraminate degradation; D-fructose 6-phosphate from N-acetylneuraminate: step 5/5. Its function is as follows. Catalyzes the reversible isomerization-deamination of glucosamine 6-phosphate (GlcN6P) to form fructose 6-phosphate (Fru6P) and ammonium ion. The polypeptide is Glucosamine-6-phosphate deaminase (Streptococcus suis (strain 98HAH33)).